The primary structure comprises 185 residues: Ribosome-recycling factor (185 aa).

This sequence belongs to the RRF family.

The protein localises to the cytoplasm. Its function is as follows. Responsible for the release of ribosomes from messenger RNA at the termination of protein biosynthesis. May increase the efficiency of translation by recycling ribosomes from one round of translation to another. This chain is Ribosome-recycling factor, found in Shewanella sp. (strain W3-18-1).